Reading from the N-terminus, the 115-residue chain is Thiosulfate:glutathione sulfurtransferase (115 aa).

In terms of domain architecture, Rhodanese spans 17–115 (ASGRARLFDV…AYREWLEKES (99 aa)). The active-site Cysteine persulfide intermediate is cysteine 79.

Highly expressed in kidney, liver and skeletal muscle. Lower levels of expression in heart, colon, thymus, spleen, placenta and lung. Weakly expressed in brain, small intestine and peripheral blood leukocytes. Expressed at high levels in the breast carcinoma cell lines MCF-7 and MDA-MB-468 and at a lower level in the breast carcinoma cell line MDA-MB-231, the colon carcinoma call line LoVo and the lung carcinoma cell line A-549. No expression in the cell lines EFO-27 and HeLa, or the normal breast tissue cell lines MCF-10A and H184A1. Detected in invasive ductal carcinoma, but not in the adjacent tissues.

It is found in the cytoplasm. The protein resides in the perinuclear region. It carries out the reaction thiosulfate + glutathione = S-sulfanylglutathione + sulfite + H(+). The enzyme catalyses thiosulfate + 2 glutathione = glutathione disulfide + hydrogen sulfide + sulfite + 2 H(+). Its activity is regulated as follows. GSS(-) is a potent inhibitor of TSTD1, since the presence of the sulfur dioxygenase (SDO) strongly increases the TSTD1 catalytic activity. Its function is as follows. Thiosulfate:glutathione sulfurtransferase (TST) required to produce S-sulfanylglutathione (GSS(-)), a central intermediate in hydrogen sulfide metabolism. Provides the link between the first step in mammalian H(2)S metabolism performed by the sulfide:quinone oxidoreductase (SQOR) which catalyzes the conversion of H(2)S to thiosulfate, and the sulfur dioxygenase (SDO) which uses GSS(-) as substrate. The thermodynamic coupling of the irreversible SDO and reversible TST reactions provides a model for the physiologically relevant reaction with thiosulfate as the sulfane donor. GSS(-) spontaneously reacts with glutathione to form glutathione disulfide. In Homo sapiens (Human), this protein is Thiosulfate:glutathione sulfurtransferase (TSTD1).